A 379-amino-acid chain; its full sequence is Spermatogenesis-associated protein 17 (379 aa).

IQ domains are found at residues 48–77 (ENDAAVMIQSWFRGCQVRAYMRHLNRVVTI), 71–100 (LNRVVTIIQKWWRSYLGRKFYQLVVEAAYY), and 107–136 (YNEMAVRIQRRWRGFRIRKYCFNYYYLKEY).

As to expression, strongly expressed in adult testis but weakly expressed in the spleen and thymus. Strongly expressed in round and elongating spermatids, and weakly or not expressed in spermatozoa.

It is found in the cytoplasm. This Mus musculus (Mouse) protein is Spermatogenesis-associated protein 17 (Spata17).